Reading from the N-terminus, the 481-residue chain is Alkaline protease secretion protein AprF (481 aa).

A disordered region spans residues 462 to 481; the sequence is PAPLHTLSKTDTEENRSALN. A compositionally biased stretch (basic and acidic residues) spans 469 to 481; sequence SKTDTEENRSALN.

This sequence belongs to the outer membrane factor (OMF) (TC 1.B.17) family.

It is found in the cell outer membrane. Involved in the secretion of alkaline protease. This Pseudomonas aeruginosa (strain ATCC 15692 / DSM 22644 / CIP 104116 / JCM 14847 / LMG 12228 / 1C / PRS 101 / PAO1) protein is Alkaline protease secretion protein AprF (aprF).